The chain runs to 593 residues: Tyrosine-protein phosphatase non-receptor type 11 (593 aa).

Thr2 is subject to N-acetylthreonine. SH2 domains lie at 6–102 and 112–216; these read WFHP…KYPL and WFHG…KQPL. Phosphotyrosine is present on residues Tyr62 and Tyr66. The region spanning 247 to 517 is the Tyrosine-protein phosphatase domain; it reads FWEEFETLQQ…EAQYRFIYMA (271 aa). Substrate contacts are provided by residues Asp425, 459-465, and Gln506; that span reads CSAGIGR. Cys459 acts as the Phosphocysteine intermediate in catalysis. Phosphotyrosine; by PDGFR occurs at positions 542 and 580.

Belongs to the protein-tyrosine phosphatase family. Non-receptor class 2 subfamily. Interacts with phosphorylated SIT1, LIME1, BCAR3 and MZPL1. Interacts with FCRL4, FCRL6, ANKHD1, SHB, INPP5D/SHIP1 and CD84. Interacts with MILR1 (tyrosine-phosphorylated). Interacts with FLT1 (tyrosine-phosphorylated), FLT3 (tyrosine-phosphorylated), FLT4 (tyrosine-phosphorylated), KIT and GRB2. Interacts with PTPNS1. Interacts with KIR2DL1; the interaction is enhanced by ARRB2. Interacts (via SH2 domain) with TEK/TIE2 (tyrosine phosphorylated). Interacts with GAB2. Interacts with TERT; the interaction retains TERT in the nucleus. Interacts with PECAM1 and FER. Interacts with EPHA2 (activated); participates in PTK2/FAK1 dephosphorylation in EPHA2 downstream signaling. Interacts with PDGFRA (tyrosine phosphorylated). Interacts with PDGFRB (tyrosine phosphorylated); this interaction increases the PTPN11 phosphatase activity. Interacts with ROS1; this mediates PTPN11 phosphorylation. Interacts with CEACAM1 (via cytoplasmic domain); this interaction depends on the monomer/dimer equilibrium and is phosphorylation-dependent. Interacts with MPIG6B (via ITIM motif). Interacts with SIGLEC10. Interacts with CLEC12B (via ITIM motif); this interaction triggers dephosphorylation and activation of PTPN11. Interacts (via SH2 domains) with NEDD9/CAS-L; the interaction is enhanced when NEDD9/CAS-L is tyrosine phosphorylated. Post-translationally, phosphorylated on Tyr-542 and Tyr-580 upon receptor protein tyrosine kinase activation; which creates a binding site for GRB2 and other SH2-containing proteins. Phosphorylated upon activation of the receptor-type kinase FLT3. Phosphorylated upon activation of the receptor-type kinase PDGFRA. Phosphorylated by activated PDGFRB. Expressed in brain, muscle and lung.

It localises to the cytoplasm. The catalysed reaction is O-phospho-L-tyrosyl-[protein] + H2O = L-tyrosyl-[protein] + phosphate. Its activity is regulated as follows. Inhibited by orthovanadate, molybdate and spermidine. Acts downstream of various receptor and cytoplasmic protein tyrosine kinases to participate in the signal transduction from the cell surface to the nucleus. Positively regulates MAPK signal transduction pathway. Dephosphorylates GAB1, ARHGAP35 and EGFR. Dephosphorylates ROCK2 at 'Tyr-722' resulting in stimulation of its RhoA binding activity. Dephosphorylates CDC73. Dephosphorylates SOX9 on tyrosine residues, leading to inactivate SOX9 and promote ossification. Dephosphorylates tyrosine-phosphorylated NEDD9/CAS-L. The chain is Tyrosine-protein phosphatase non-receptor type 11 (Ptpn11) from Rattus norvegicus (Rat).